Reading from the N-terminus, the 178-residue chain is MFQATTIIAVRKGQQTAIAGDGQVTLGQNTIMKQNATKIRRLYEGKVIAGFAGAVADAFTLFAKFEEKLKQAGGNLSKAAVEIAREWRSDRILRRLEALLIVADAEKIFIVSGSGELIEPDDGIAAIGSGGAYALAAARALNAFSELNAREIAVESLKIASGICVYTNEQISVEVIEK.

Residue Thr5 is part of the active site. Na(+)-binding residues include Ser161, Cys164, and Thr167.

The protein belongs to the peptidase T1B family. HslV subfamily. A double ring-shaped homohexamer of HslV is capped on each side by a ring-shaped HslU homohexamer. The assembly of the HslU/HslV complex is dependent on binding of ATP.

It localises to the cytoplasm. It catalyses the reaction ATP-dependent cleavage of peptide bonds with broad specificity.. With respect to regulation, allosterically activated by HslU binding. Functionally, protease subunit of a proteasome-like degradation complex believed to be a general protein degrading machinery. The chain is ATP-dependent protease subunit HslV from Syntrophomonas wolfei subsp. wolfei (strain DSM 2245B / Goettingen).